The sequence spans 158 residues: C-type lectin galactose-binding isoform (158 aa).

An N-terminal signal peptide occupies residues 1–20 (MGRFLLVTLSLLVVAFSLNG). 3 cysteine pairs are disulfide-bonded: Cys26-Cys37, Cys54-Cys154, and Cys129-Cys146. Residues 33-155 (KNGYCYKVFK…CTALRPFLCQ (123 aa)) form the C-type lectin domain. 5 residues coordinate Ca(2+): Gln119, Asp121, Glu127, Asn142, and Asp143. Residues 119–121 (QPD) carry the Galactose-binding motif.

This sequence belongs to the true venom lectin family. Homodimer; disulfide-linked. Expressed by the venom gland.

It is found in the secreted. Functionally, galactose-binding lectin that binds to and agglutinates erythrocytes in a calcium-dependent manner. This is C-type lectin galactose-binding isoform from Hoplocephalus stephensii (Stephens's banded snake).